The sequence spans 465 residues: UDP-N-acetylmuramoylalanine--D-glutamate ligase (465 aa).

127–133 (GSNGKST) is a binding site for ATP.

It belongs to the MurCDEF family.

The protein resides in the cytoplasm. It catalyses the reaction UDP-N-acetyl-alpha-D-muramoyl-L-alanine + D-glutamate + ATP = UDP-N-acetyl-alpha-D-muramoyl-L-alanyl-D-glutamate + ADP + phosphate + H(+). It participates in cell wall biogenesis; peptidoglycan biosynthesis. Functionally, cell wall formation. Catalyzes the addition of glutamate to the nucleotide precursor UDP-N-acetylmuramoyl-L-alanine (UMA). This Cereibacter sphaeroides (strain ATCC 17023 / DSM 158 / JCM 6121 / CCUG 31486 / LMG 2827 / NBRC 12203 / NCIMB 8253 / ATH 2.4.1.) (Rhodobacter sphaeroides) protein is UDP-N-acetylmuramoylalanine--D-glutamate ligase.